The primary structure comprises 188 residues: Phosphatidylinositol N-acetylglucosaminyltransferase subunit H (188 aa).

It belongs to the PIGH family. In terms of assembly, component of the glycosylphosphatidylinositol-N-acetylglucosaminyltransferase (GPI-GnT) complex composed at least by PIGA, PIGC, PIGH, PIGP, PIGQ, PIGY and DPM2. Interacts with PIGQ.

It localises to the cytoplasm. It functions in the pathway glycolipid biosynthesis; glycosylphosphatidylinositol-anchor biosynthesis. Its function is as follows. Part of the glycosylphosphatidylinositol-N-acetylglucosaminyltransferase (GPI-GnT) complex that catalyzes the transfer of N-acetylglucosamine from UDP-N-acetylglucosamine to phosphatidylinositol and participates in the first step of GPI biosynthesis. This is Phosphatidylinositol N-acetylglucosaminyltransferase subunit H from Homo sapiens (Human).